The sequence spans 102 residues: UPF0251 protein ASA_1331 (102 aa).

The protein belongs to the UPF0251 family.

This is UPF0251 protein ASA_1331 from Aeromonas salmonicida (strain A449).